Reading from the N-terminus, the 241-residue chain is 1-(5-phosphoribosyl)-5-[(5-phosphoribosylamino)methylideneamino] imidazole-4-carboxamide isomerase (241 aa).

Catalysis depends on D8, which acts as the Proton acceptor. D127 serves as the catalytic Proton donor.

Belongs to the HisA/HisF family.

It is found in the cytoplasm. The catalysed reaction is 1-(5-phospho-beta-D-ribosyl)-5-[(5-phospho-beta-D-ribosylamino)methylideneamino]imidazole-4-carboxamide = 5-[(5-phospho-1-deoxy-D-ribulos-1-ylimino)methylamino]-1-(5-phospho-beta-D-ribosyl)imidazole-4-carboxamide. It functions in the pathway amino-acid biosynthesis; L-histidine biosynthesis; L-histidine from 5-phospho-alpha-D-ribose 1-diphosphate: step 4/9. This Thermotoga petrophila (strain ATCC BAA-488 / DSM 13995 / JCM 10881 / RKU-1) protein is 1-(5-phosphoribosyl)-5-[(5-phosphoribosylamino)methylideneamino] imidazole-4-carboxamide isomerase.